We begin with the raw amino-acid sequence, 74 residues long: Large ribosomal subunit protein bL27c (74 aa).

It belongs to the bacterial ribosomal protein bL27 family.

It localises to the plastid. Its subcellular location is the chloroplast. This chain is Large ribosomal subunit protein bL27c (rpl27), found in Calyptrosphaera sphaeroidea.